Here is a 363-residue protein sequence, read N- to C-terminus: Phospho-N-acetylmuramoyl-pentapeptide-transferase (363 aa).

Transmembrane regions (helical) follow at residues 3 to 23 (QILFAGVIGLFLTLVGTPLLI), 48 to 68 (GTPTMGGIAFILATVAAYFLA), 83 to 103 (PTFSGLLVLGLMVGMGLVGFL), 121 to 141 (AKMIGQLTVGIAFAVLSLQFA), 159 to 179 (FGWTIGPVLFVVWALFMILAM), 192 to 212 (LATGASVLVFGAYTFIGVWQF), 234 to 254 (PLDLAVVASALMGSCLGFLWW), 261 to 281 (IFMGDTGSLALGGVLAGLAIC), 286 to 306 (LLMAILGGLFVLITMSVVIQV), and 340 to 360 (FWIIQGICVIVGLGLFYAGWA).

This sequence belongs to the glycosyltransferase 4 family. MraY subfamily. Mg(2+) serves as cofactor.

It is found in the cell membrane. It carries out the reaction UDP-N-acetyl-alpha-D-muramoyl-L-alanyl-gamma-D-glutamyl-meso-2,6-diaminopimeloyl-D-alanyl-D-alanine + di-trans,octa-cis-undecaprenyl phosphate = di-trans,octa-cis-undecaprenyl diphospho-N-acetyl-alpha-D-muramoyl-L-alanyl-D-glutamyl-meso-2,6-diaminopimeloyl-D-alanyl-D-alanine + UMP. It participates in cell wall biogenesis; peptidoglycan biosynthesis. In terms of biological role, catalyzes the initial step of the lipid cycle reactions in the biosynthesis of the cell wall peptidoglycan: transfers peptidoglycan precursor phospho-MurNAc-pentapeptide from UDP-MurNAc-pentapeptide onto the lipid carrier undecaprenyl phosphate, yielding undecaprenyl-pyrophosphoryl-MurNAc-pentapeptide, known as lipid I. The protein is Phospho-N-acetylmuramoyl-pentapeptide-transferase of Streptomyces coelicolor (strain ATCC BAA-471 / A3(2) / M145).